The following is a 153-amino-acid chain: Calmodulin-like protein 3 (153 aa).

4 EF-hand domains span residues 1–36 (MDQA…LGIY), 37–72 (IPDK…IMEE), 74–109 (DEEE…LGLK), and 112–147 (RTLE…GGFA). 19 residues coordinate Ca(2+): D14, N16, D18, K20, E25, D50, N52, D54, Y56, E61, D87, N89, D91, E98, D125, D127, D129, M131, and E136.

It belongs to the calmodulin family.

Functionally, potential calcium sensor. This chain is Calmodulin-like protein 3 (CML3), found in Arabidopsis thaliana (Mouse-ear cress).